We begin with the raw amino-acid sequence, 212 residues long: Dephospho-CoA kinase (212 aa).

The DPCK domain maps to 6–211; it reads RLGLTGGIGS…LSCQPLSPNQ (206 aa). 14-19 lines the ATP pocket; the sequence is GSGKST.

This sequence belongs to the CoaE family.

It localises to the cytoplasm. It catalyses the reaction 3'-dephospho-CoA + ATP = ADP + CoA + H(+). It functions in the pathway cofactor biosynthesis; coenzyme A biosynthesis; CoA from (R)-pantothenate: step 5/5. In terms of biological role, catalyzes the phosphorylation of the 3'-hydroxyl group of dephosphocoenzyme A to form coenzyme A. In Albidiferax ferrireducens (strain ATCC BAA-621 / DSM 15236 / T118) (Rhodoferax ferrireducens), this protein is Dephospho-CoA kinase.